A 63-amino-acid polypeptide reads, in one-letter code: MATPKAKVSKSRRDKRRAQFTARSKAAVTTICPNCGEPTLSHRACRHCGQYRGRVVTKKSANG.

Residues 1 to 23 (MATPKAKVSKSRRDKRRAQFTAR) are disordered. Over residues 7–18 (KVSKSRRDKRRA) the composition is skewed to basic residues.

Belongs to the bacterial ribosomal protein bL32 family.

The polypeptide is Large ribosomal subunit protein bL32 (Prosthecochloris aestuarii (strain DSM 271 / SK 413)).